The chain runs to 159 residues: UPF0262 protein Dshi_0980 (159 aa).

It belongs to the UPF0262 family.

The sequence is that of UPF0262 protein Dshi_0980 from Dinoroseobacter shibae (strain DSM 16493 / NCIMB 14021 / DFL 12).